The chain runs to 49 residues: Cytochrome b559 subunit beta (49 aa).

A helical transmembrane segment spans residues 24–40; sequence WLAVHVLGVPTVFFLGA. Residue His28 coordinates heme.

It belongs to the PsbE/PsbF family. In terms of assembly, heterodimer of an alpha subunit and a beta subunit. PSII is composed of 1 copy each of membrane proteins PsbA, PsbB, PsbC, PsbD, PsbE, PsbF, PsbH, PsbI, PsbJ, PsbK, PsbL, PsbM, PsbT, PsbX, PsbY, Psb30/Ycf12, peripheral proteins PsbO, CyanoQ (PsbQ), PsbU, PsbV and a large number of cofactors. It forms dimeric complexes. Heme b serves as cofactor.

Its subcellular location is the cellular thylakoid membrane. This b-type cytochrome is tightly associated with the reaction center of photosystem II (PSII). PSII is a light-driven water:plastoquinone oxidoreductase that uses light energy to abstract electrons from H(2)O, generating O(2) and a proton gradient subsequently used for ATP formation. It consists of a core antenna complex that captures photons, and an electron transfer chain that converts photonic excitation into a charge separation. This Prochlorococcus marinus (strain MIT 9303) protein is Cytochrome b559 subunit beta.